We begin with the raw amino-acid sequence, 808 residues long: N-terminal kinase-like protein (808 aa).

Residues Phe-14–Leu-314 enclose the Protein kinase domain. 3 HEAT repeats span residues Ile-350–Gln-388, Ile-389–Glu-427, and Ile-507–Thr-545. Disordered regions lie at residues Val-540–Ala-566, Ser-587–Asp-646, and Ser-658–Asp-808. The segment covering Ala-556 to Ala-566 has biased composition (low complexity). Residues Ser-587–Gln-600 show a composition bias toward polar residues. A compositionally biased stretch (pro residues) spans Arg-601–Ala-617. Positions Leu-660–Asn-680 are enriched in polar residues. A compositionally biased stretch (basic and acidic residues) spans Ser-681–Glu-690. Position 754 is a phosphoserine (Ser-754). Residues Trp-755–Glu-764 show a composition bias toward acidic residues. The stretch at Glu-761–Lys-797 forms a coiled coil. 2 stretches are compositionally biased toward basic and acidic residues: residues Thr-765 to Ala-775 and Arg-782 to Val-795. The interaction with COPB1 stretch occupies residues Arg-793–Asp-808.

This sequence belongs to the protein kinase superfamily. As to quaternary structure, interacts with GORAB. Interacts with COPA, COPB1 and COPB2. Homooligomer. Interacts with AP2B1. As to expression, ubiquitous.

The protein resides in the cytoplasm. The protein localises to the cytoskeleton. It localises to the microtubule organizing center. Its subcellular location is the centrosome. It is found in the endoplasmic reticulum-Golgi intermediate compartment. The protein resides in the golgi apparatus. The protein localises to the cis-Golgi network. It localises to the nucleus. In terms of biological role, regulates COPI-mediated retrograde protein traffic at the interface between the Golgi apparatus and the endoplasmic reticulum. Involved in the maintenance of the Golgi apparatus morphology. Functionally, acts as a transcriptional activator. It binds to three different types of GC-rich DNA binding sites (box-A, -B and -C) in the beta-polymerase promoter region. It also binds to the TERT promoter region. This chain is N-terminal kinase-like protein (SCYL1), found in Homo sapiens (Human).